The primary structure comprises 243 residues: Pyridoxine 5'-phosphate synthase (243 aa).

N9 serves as a coordination point for 3-amino-2-oxopropyl phosphate. 11-12 lines the 1-deoxy-D-xylulose 5-phosphate pocket; it reads DH. R20 serves as a coordination point for 3-amino-2-oxopropyl phosphate. H45 (proton acceptor) is an active-site residue. 2 residues coordinate 1-deoxy-D-xylulose 5-phosphate: R47 and H52. Residue E72 is the Proton acceptor of the active site. T102 provides a ligand contact to 1-deoxy-D-xylulose 5-phosphate. H193 (proton donor) is an active-site residue. 3-amino-2-oxopropyl phosphate-binding positions include G194 and 215-216; that span reads GH.

It belongs to the PNP synthase family. In terms of assembly, homooctamer; tetramer of dimers.

The protein resides in the cytoplasm. The catalysed reaction is 3-amino-2-oxopropyl phosphate + 1-deoxy-D-xylulose 5-phosphate = pyridoxine 5'-phosphate + phosphate + 2 H2O + H(+). Its pathway is cofactor biosynthesis; pyridoxine 5'-phosphate biosynthesis; pyridoxine 5'-phosphate from D-erythrose 4-phosphate: step 5/5. Functionally, catalyzes the complicated ring closure reaction between the two acyclic compounds 1-deoxy-D-xylulose-5-phosphate (DXP) and 3-amino-2-oxopropyl phosphate (1-amino-acetone-3-phosphate or AAP) to form pyridoxine 5'-phosphate (PNP) and inorganic phosphate. The sequence is that of Pyridoxine 5'-phosphate synthase from Pectobacterium atrosepticum (strain SCRI 1043 / ATCC BAA-672) (Erwinia carotovora subsp. atroseptica).